The chain runs to 163 residues: Jun dimerization protein 2 (163 aa).

2 disordered regions span residues 1-20 (MMPGQIPDPSVTTGSLPGLG) and 58-89 (GKRPQPVKSELDEEEERRKRRREKNKVAAARC). Residue Lys65 forms a Glycyl lysine isopeptide (Lys-Gly) (interchain with G-Cter in SUMO2) linkage. A bZIP domain is found at 72 to 135 (EERRKRRREK…QQLILMLNRH (64 aa)). The segment at 74–96 (RRKRRREKNKVAAARCRNKKKER) is basic motif. The tract at residues 100 to 128 (LQRESERLELMNAELKTQIEELKQERQQL) is leucine-zipper. Thr148 is subject to Phosphothreonine; by MAPK8.

This sequence belongs to the bZIP family. ATF subfamily. Forms a homodimer or heterodimer with JUN, JUNB, JUND, CEBPG and ATF2 thereby inhibiting transactivation by JUN, ATF2 and CEBPG. Binds multiple DNA elements such as cAMP-response element (CRE) and TPA response element (TRE) either as homodimer or heterodimer. Interacts with IRF2BP1. Phosphorylation of Thr-148 by MAPK8 in response to different stress conditions such as, UV irradiation, oxidatives stress and anisomycin treatments. In terms of processing, polyubiquitinated; probably by IRF2BP1.

The protein resides in the nucleus. Functionally, component of the AP-1 transcription factor that represses transactivation mediated by the Jun family of proteins. Involved in a variety of transcriptional responses associated with AP-1 such as UV-induced apoptosis, cell differentiation, tumorigenesis and antitumogeneris. Can also function as a repressor by recruiting histone deacetylase 3/HDAC3 to the promoter region of JUN. May control transcription via direct regulation of the modification of histones and the assembly of chromatin. The chain is Jun dimerization protein 2 (JDP2) from Homo sapiens (Human).